Consider the following 347-residue polypeptide: Circulating cathodic antigen (347 aa).

A coiled-coil region spans residues 76–109 (ICLAAENKQLEQLKIENKTLRNSLDEHQTALDMI). The interval 149–177 (PGPKSVNTPSTNSIDSQSVSQKSNSGKVD) is disordered. Over residues 153–174 (SVNTPSTNSIDSQSVSQKSNSG) the composition is skewed to polar residues. Positions 206 to 233 (DAYATELEEELHRLRSENAGLREILMIS) form a coiled coil. Residues 303-332 (LYNIPNPSDDSSNSGTISGNHSDEDSDEDD) are disordered. The segment covering 307–316 (PNPSDDSSNS) has biased composition (low complexity).

This sequence belongs to the SIKE family. Post-translationally, O-glycosylated.

Its function is as follows. Involved in protection of the schistosome gut. The protein is Circulating cathodic antigen of Schistosoma mansoni (Blood fluke).